The sequence spans 381 residues: Alkanesulfonate monooxygenase (381 aa).

This sequence belongs to the SsuD family. In terms of assembly, homotetramer.

The catalysed reaction is an alkanesulfonate + FMNH2 + O2 = an aldehyde + FMN + sulfite + H2O + 2 H(+). Catalyzes the desulfonation of aliphatic sulfonates. This chain is Alkanesulfonate monooxygenase, found in Escherichia coli O9:H4 (strain HS).